Reading from the N-terminus, the 143-residue chain is Protein SLC31A2 (143 aa).

At 1–22 the chain is on the extracellular side; the sequence is MAMHFIFSDTAVLLFDFWSVHS. The helical transmembrane segment at 23–43 threads the bilayer; sequence PAGMALSVLVLLLLAVLYEGI. At 44–93 the chain is on the cytoplasmic side; sequence KVGKAKLLNQVLVNLPTSISQQTIAETDGDSAGSDSFPVGRTHHRWYLCH. Ser-77 carries the post-translational modification Phosphoserine. Residues 94 to 114 traverse the membrane as a helical segment; it reads FGQSLIHVIQVVIGYFIMLAV. Residues 115–119 lie on the Extracellular side of the membrane; sequence MSYNT. A helical membrane pass occupies residues 120–140; the sequence is WIFLGVVLGSAVGYYLAYPLL. The Cytoplasmic portion of the chain corresponds to 141–143; it reads STA.

Belongs to the copper transporter (Ctr) (TC 1.A.56) family. SLC31A subfamily. Oligomer. Interacts with SLC31A1; this interaction stabilizes SLC31A2 and protects it from ubiquitination and the subsequent degradation. Ubiquitinated; ubiquitination and the subsequent proteasomal degradation are prevent by SLC31A1 that stabilizes it. Ubiquitous with high expression in placenta and heart.

It localises to the membrane. Its subcellular location is the cytoplasmic vesicle membrane. It is found in the late endosome membrane. The protein localises to the lysosome membrane. Does not function as a copper(1+) importer in vivo. However, in vitro functions as a low-affinity copper(1+) importer. Regulator of SLC31A1 which facilitates the cleavage of the SLC31A1 ecto-domain or which stabilizes the truncated form of SLC31A1 (Truncated CTR1 form), thereby drives the SLC31A1 truncated form-dependent endosomal copper export and modulates the copper and cisplatin accumulation via SLC31A1. The protein is Protein SLC31A2 of Homo sapiens (Human).